The following is a 773-amino-acid chain: Angiomotin-like protein 2 (773 aa).

Disordered regions lie at residues 41–157 (GGAG…HVRS), 169–238 (RNGA…SPHF), and 259–309 (QYQY…LAQM). Basic and acidic residues-rich tracts occupy residues 80–91 (QGGETHLAENRL), 100–112 (KGEE…EAKA), and 141–152 (RRQDEALRELRH). The required for interaction with CDH5 stretch occupies residues 101–302 (GEELPTYEEA…GPPGAQATSG (202 aa)). Residue Tyr107 is modified to Phosphotyrosine; by FGFR1. Residues 177–190 (HMSSSHSFPQLARS) are compositionally biased toward polar residues. Positions 196–213 (PRGPPAEGPEPRGPPPQY) are enriched in pro residues. A required for interaction with CDH1 region spans residues 220–302 (QETAAVNDPR…GPPGAQATSG (83 aa)). Residues 304 to 577 (AHLAQMESVL…KYLEERAMRQ (274 aa)) adopt a coiled-coil conformation. Glycyl lysine isopeptide (Lys-Gly) (interchain with G-Cter in ubiquitin) cross-links involve residues Lys342 and Lys403. Disordered stretches follow at residues 589–611 (QRDT…NEGL) and 677–754 (WQGF…TTSL). Over residues 701–710 (EEPPATPPLP) the composition is skewed to pro residues. Residues 719 to 734 (DGSTQTDGPADSTSAC) show a composition bias toward polar residues. Phosphoserine occurs at positions 753 and 756. The short motif at 770–773 (EILI) is the PDZ-binding element.

It belongs to the angiomotin family. In terms of assembly, part of a complex composed of AMOTL2, MAGI1 and CDH5, within the complex AMOTL2 acts as a scaffold protein for the interaction of MAGI1 with CDH5. The complex is required for coupling actin fibers to cell junctions in endothelial cells. Within the complex AMOTL2 (via its N-terminus) interacts with CDH5. Interacts (via N-terminus) with MAGI1. Interacts (via N-terminus) with ACTB; the interaction facilitates binding of cell junction complexes to actin fibers in endothelial cells. Interacts with CDH1; the interaction may facilitate binding of radial actin fibers to cell junction complexes. Interacts with SRC. Interacts with YAP1; the interaction is required for ubiquitination of AMOTL2 and localization of YAP1 to tight junctions. Interacts with WWP1; the interaction facilitates WWP1 interaction with the Crumbs complex and subsequent WWP1 translocation to the plasma membrane. WWP1 interaction with the Crumbs complex promotes WWP1 monoubiquitination of AMOTL2 which subsequently activates the Hippo signaling pathway. When ubiquitinated interacts with LATS2 (via UBA domain); the interaction promotes LATS2 phosphorylation of YAP1. Interacts (via PPXY motif) with WWTR1/TAZ (via WW domain); the interaction promotes WWTR1/TAZ localization to the cytoplasm and thereby inhibition of its transcriptional properties. Interacts with PHLDB2; interaction may facilitate PHLDB2 localization to the myotube podosome cortex that surrounds the core. Post-translationally, monoubiquitinated at Lys-342 and Lys-403 by Crumbs complex-bound WWP1. De-ubiquitinated at Lys-342 and Lys-403 by USP9X; the interaction may be promoted by cell contact inhibition. Deubiquitination of AMOTL2 negatively regulates Hippo signaling activation. In terms of processing, phosphorylation at Tyr-107 is necessary for efficient binding to SRC and synergistically functioning with SRC to activate the downstream MAPK pathway.

The protein resides in the recycling endosome. It localises to the cytoplasm. Its subcellular location is the cell projection. The protein localises to the podosome. It is found in the cell junction. In terms of biological role, regulates the translocation of phosphorylated SRC to peripheral cell-matrix adhesion sites. Required for proper architecture of actin filaments. Plays a role in coupling actin fibers to cell junctions in endothelial cells and is therefore required for correct endothelial cell morphology via facilitating transcellular transmission of mechanical force resulting in endothelial cell elongation. Required for the anchoring of radial actin fibers to CDH1 junction complexes at the cell membrane which facilitates organization of radial actin fiber structure and cellular response to contractile forces. This contributes to maintenance of cell area, size, shape, epithelial sheet organization and trophectoderm cell properties that facilitate blastocyst zona hatching. Inhibits the Wnt/beta-catenin signaling pathway, probably by recruiting CTNNB1 to recycling endosomes and hence preventing its translocation to the nucleus. Participates in angiogenesis. Activates the Hippo signaling pathway in response to cell contact inhibition via interaction with and ubiquitination by Crumbs complex-bound WWP1. Ubiquitinated AMOTL2 then interacts with LATS2 which in turn phosphorylates YAP1, excluding it from the nucleus and localizing it to the cytoplasm and tight junctions, therefore ultimately repressing YAP1-driven transcription of target genes. Acts to inhibit WWTR1/TAZ transcriptional coactivator activity via sequestering WWTR1/TAZ in the cytoplasm and at tight junctions. Regulates the size and protein composition of the podosome cortex and core at myofibril neuromuscular junctions. Selectively promotes FGF-induced MAPK activation through SRC. May play a role in the polarity, proliferation and migration of endothelial cells. The chain is Angiomotin-like protein 2 from Rattus norvegicus (Rat).